The primary structure comprises 854 residues: Envelope glycoprotein gp150 (854 aa).

Residues 1–783 (MAEGFAANRQ…WIGNIPQYLK (783 aa)) are Extracellular-facing. Asn-218, Asn-256, Asn-267, Asn-272, Asn-296, Asn-328, Asn-334, Asn-340, Asn-416, Asn-420, Asn-479, Asn-497, Asn-529, Asn-546, and Asn-549 each carry an N-linked (GlcNAc...) asparagine; by host glycan. The interval 614-634 (VMLALATVLSMAGAGTGATAI) is fusion peptide. A coiled-coil region spans residues 641-691 (QQVLATHQEAIEKVTEALKINNLRLVTLEHQVLVIGLKVEAMEKFLYTAFA). An immunosuppression region spans residues 660–678 (INNLRLVTLEHQVLVIGLK). Asn-715, Asn-719, Asn-727, and Asn-735 each carry an N-linked (GlcNAc...) asparagine; by host glycan. Residues 734–770 (YNQTKDLQQRFYEIIMDIEQNNVQGKKGLQQLQEWED) adopt a coiled-coil conformation. Residues 784–804 (GLLGGILGIGLGMLLLILCLP) form a helical membrane-spanning segment. Residues 805 to 854 (TLVDCIRNCIHKILGYTVIAMPEVEEEEIQPQMELRRNGRQCGMSEKEEE) are Cytoplasmic-facing.

In terms of assembly, the mature envelope protein (Env) consists of a trimer of SU-TM heterodimers attached by noncovalent interactions or by a labile interchain disulfide bond. Specific enzymatic cleavages in vivo yield mature proteins. Envelope glycoproteins are synthesized as an inactive precursor that is N-glycosylated and processed likely by host cell furin or by a furin-like protease in the Golgi to yield the mature SU and TM proteins. The cleavage site between SU and TM requires the minimal sequence [KR]-X-[KR]-R.

The protein localises to the virion membrane. Its subcellular location is the host cell membrane. In terms of biological role, the surface protein (SU) attaches the virus to the host cell by binding to its receptor. This interaction triggers the refolding of the transmembrane protein (TM) and is thought to activate its fusogenic potential by unmasking its fusion peptide. Fusion occurs at the host cell plasma membrane. The transmembrane protein (TM) acts as a class I viral fusion protein. Under the current model, the protein has at least 3 conformational states: pre-fusion native state, pre-hairpin intermediate state, and post-fusion hairpin state. During viral and target cell membrane fusion, the coiled coil regions (heptad repeats) assume a trimer-of-hairpins structure, positioning the fusion peptide in close proximity to the C-terminal region of the ectodomain. The formation of this structure appears to drive apposition and subsequent fusion of viral and target cell membranes. Membranes fusion leads to delivery of the nucleocapsid into the cytoplasm. In Feline immunodeficiency virus (isolate Wo) (FIV), this protein is Envelope glycoprotein gp150 (env).